The chain runs to 180 residues: Adenine phosphoribosyltransferase (180 aa).

It belongs to the purine/pyrimidine phosphoribosyltransferase family. Homodimer.

The protein localises to the cytoplasm. It carries out the reaction AMP + diphosphate = 5-phospho-alpha-D-ribose 1-diphosphate + adenine. Its pathway is purine metabolism; AMP biosynthesis via salvage pathway; AMP from adenine: step 1/1. Catalyzes a salvage reaction resulting in the formation of AMP, that is energically less costly than de novo synthesis. In Rhizobium johnstonii (strain DSM 114642 / LMG 32736 / 3841) (Rhizobium leguminosarum bv. viciae), this protein is Adenine phosphoribosyltransferase.